Here is a 151-residue protein sequence, read N- to C-terminus: Caveolin-3 (151 aa).

The Cytoplasmic segment spans residues 1–83 (MMAEEHTDLE…RLLSTLLGVP (83 aa)). A Glycyl lysine isopeptide (Lys-Gly) (interchain with G-Cter in SUMO3) cross-link involves residue lysine 38. The required for interaction with DAG1 stretch occupies residues 64–114 (TFTVSKYWCYRLLSTLLGVPLALLWGFLFACISFCHIWAVVPCIKSYLIEI). Positions 84–104 (LALLWGFLFACISFCHIWAVV) form an intramembrane region, helical. The Cytoplasmic segment spans residues 105–151 (PCIKSYLIEIQCISHIYSLCIRTFCNPLFAALGQVCSNIKVMLRKEV).

It belongs to the caveolin family. In terms of assembly, homooligomer. Interacts with DYSF. Interacts with DLG1 and KCNA5; forms a ternary complex. Interacts with DAG1 (via its C-terminal); the interaction prevents binding of DAG1 with DMD. Interacts with TRIM72. Interacts with MUSK; may regulate MUSK signaling. Interacts with POPDC1. Interacts with CAVIN1, CAVIN2 and CAVIN4. In terms of processing, sumoylation with SUMO3 by PIAS4 may reduce agonist-induced internalization and desensitization of adrenergic receptor ABRD2.

It localises to the golgi apparatus membrane. The protein localises to the cell membrane. The protein resides in the membrane. It is found in the caveola. Its subcellular location is the sarcolemma. Functionally, may act as a scaffolding protein within caveolar membranes. Interacts directly with G-protein alpha subunits and can functionally regulate their activity. May also regulate voltage-gated potassium channels. Plays a role in the sarcolemma repair mechanism of both skeletal muscle and cardiomyocytes that permits rapid resealing of membranes disrupted by mechanical stress. Mediates the recruitment of CAVIN2 and CAVIN3 proteins to the caveolae. This is Caveolin-3 (CAV3) from Bos taurus (Bovine).